The primary structure comprises 268 residues: Myeloid leukemia factor 1 (268 aa).

Phosphoserine occurs at positions 6, 8, and 32. An interaction with COPS3 region spans residues 50–125 (RVHNRRGHND…IGDEPPKVFQ (76 aa)). Positions 208–268 (PGRHNLENTR…KGSSVKSNKK (61 aa)) are disordered. Basic and acidic residues-rich tracts occupy residues 226 to 237 (PGSRELKRREKP) and 244 to 257 (EHGR…DKLH).

Belongs to the MLF family. Interacts with CENPU. Also interacts with NRBP1/MADM, YWHAZ/14-3-3-zeta and HNRPUL2/MANP. NRBP1 recruits a serine kinase which phosphorylates both itself and MLF1. Phosphorylated MLF1 then binds to YWHAZ and is retained in the cytoplasm. Retained in the nucleus by binding to HNRPUL2. Binds to COPS3/CSN3 which is required for suppression of COP1 and activation of p53. In terms of processing, phosphorylation is required for binding to YWHAZ.

The protein localises to the cytoplasm. Its subcellular location is the nucleus. It is found in the cell projection. It localises to the cilium. The protein resides in the cytoskeleton. The protein localises to the cilium basal body. Functionally, involved in lineage commitment of primary hemopoietic progenitors by restricting erythroid formation and enhancing myeloid formation. Interferes with erythropoietin-induced erythroid terminal differentiation by preventing cells from exiting the cell cycle through suppression of CDKN1B/p27Kip1 levels. Suppresses COP1 activity via CSN3 which activates p53 and induces cell cycle arrest. Binds DNA and affects the expression of a number of genes so may function as a transcription factor in the nucleus. The polypeptide is Myeloid leukemia factor 1 (MLF1) (Pongo abelii (Sumatran orangutan)).